The primary structure comprises 415 residues: Putative FNIP repeat-containing protein L415 (415 aa).

One copy of the FNIP repeat lies at 148–185 (FIKKGAIPDSVTHLYFGSDYLSKDIIPKNVVYLRFGDF).

This chain is Putative FNIP repeat-containing protein L415, found in Acanthamoeba polyphaga mimivirus (APMV).